Consider the following 250-residue polypeptide: Bacteriorhodopsin-I (250 aa).

7 helical membrane passes run 7-27, 42-62, 81-101, 114-134, 139-159, 185-205, and 207-227; these read EGIW…YFIA, IATI…ALGF, YTDW…LAGA, VLMI…VLSA, LVWW…LFSS, VWLV…LVGI, and IETA…GIIL. K220 carries the N6-(retinylidene)lysine modification.

Belongs to the archaeal/bacterial/fungal opsin family. The covalent binding of retinal to the apoprotein, bacterioopsin, generates bacteriorhodopsin.

The protein resides in the membrane. Its function is as follows. Light-driven proton pump. This is Bacteriorhodopsin-I (bop) from Haloarcula marismortui (strain ATCC 43049 / DSM 3752 / JCM 8966 / VKM B-1809) (Halobacterium marismortui).